The sequence spans 366 residues: Mitogen-activated protein kinase 13 (366 aa).

Positions 25-308 (YLAPAHVGSG…AAQALAHPFF (284 aa)) constitute a Protein kinase domain. ATP is bound by residues 31–39 (VGSGAYGAV) and Lys-54. Catalysis depends on Asp-150, which acts as the Proton acceptor. The residue at position 180 (Thr-180) is a Phosphothreonine; by MAP2K3, MAP2K4, MAP2K6 and MAP2K7. A TXY motif is present at residues 180-182 (TGY). Phosphotyrosine is present on Tyr-182. Ser-350 is modified (phosphoserine).

This sequence belongs to the protein kinase superfamily. CMGC Ser/Thr protein kinase family. MAP kinase subfamily. Interacts with MAPK8IP2. Mg(2+) is required as a cofactor. Dually phosphorylated on Thr-180 and Tyr-182 by MAP2K3/MKK3, MAP2K4/MKK4, MAP2K6/MKK6 and MAP2K7/MKK7, which activates the enzyme. Dephosphorylated by dual specificity phosphatase DUSP1.

It catalyses the reaction L-seryl-[protein] + ATP = O-phospho-L-seryl-[protein] + ADP + H(+). It carries out the reaction L-threonyl-[protein] + ATP = O-phospho-L-threonyl-[protein] + ADP + H(+). Its activity is regulated as follows. Activated by phosphorylation on threonine and tyrosine by dual specificity kinases, MAP2K3/MKK3, MAP2K6/MKK6, MAP2K4/MKK4 and MAP2K7/MKK7. Activation by ultraviolet radiation, hyperosmotic shock, anisomycin or by TNF-alpha is mediated by MAP2K3/MKK3. Inhibited by dual specificity phosphatase DUSP1. Functionally, serine/threonine kinase which acts as an essential component of the MAP kinase signal transduction pathway. MAPK13 is one of the four p38 MAPKs which play an important role in the cascades of cellular responses evoked by extracellular stimuli such as pro-inflammatory cytokines or physical stress leading to direct activation of transcription factors such as ELK1 and ATF2. Accordingly, p38 MAPKs phosphorylate a broad range of proteins and it has been estimated that they may have approximately 200 to 300 substrates each. MAPK13 is one of the less studied p38 MAPK isoforms. Some of the targets are downstream kinases such as MAPKAPK2, which are activated through phosphorylation and further phosphorylate additional targets. Plays a role in the regulation of protein translation by phosphorylating and inactivating EEF2K. Involved in cytoskeletal remodeling through phosphorylation of MAPT and STMN1. Mediates UV irradiation induced up-regulation of the gene expression of CXCL14. Plays an important role in the regulation of epidermal keratinocyte differentiation, apoptosis and skin tumor development. Phosphorylates the transcriptional activator MYB in response to stress which leads to rapid MYB degradation via a proteasome-dependent pathway. MAPK13 also phosphorylates and down-regulates PRKD1 during regulation of insulin secretion in pancreatic beta cells. The sequence is that of Mitogen-activated protein kinase 13 (Mapk13) from Mus musculus (Mouse).